The primary structure comprises 88 residues: Mini zinc finger protein 3 (88 aa).

The segment at 26–72 (YVECQKNHAANIGGYAVDGCREFMASGGDDALTCAACGCHRNFHRRE) adopts a ZF-HD dimerization-type; degenerate zinc-finger fold.

Homo- and heterodimers. Interacts with ZHD3, ZHD5, ZHD6, ZHD7, ZHD8, ZHD9, ZHD10 and ZHD13. As to expression, mostly expressed in roots, stems and flowers, present in seedlings and leaves, and weakly observed in inflorescence and siliques.

Its subcellular location is the cytoplasm. Functionally, inhibits zinc finger homeodomain (ZHD) transcription factors by interacting with them to prevent both their nuclear localization and their DNA-binding properties. Involved in integrating signals from multiple hormones by regulating the expression of specific genes. Promotes the formation of ectopic shoot meristems on leaf margins. The protein is Mini zinc finger protein 3 (MIF3) of Arabidopsis thaliana (Mouse-ear cress).